A 249-amino-acid chain; its full sequence is Pleckstrin homology domain-containing family F member 2 (249 aa).

Residue serine 16 is modified to Phosphoserine. In terms of domain architecture, PH spans valine 35 to threonine 131. Residue lysine 44 is modified to N6-acetyllysine. An FYVE-type zinc finger spans residues aspartate 152–serine 212. The Zn(2+) site is built by cysteine 158, cysteine 161, cysteine 175, cysteine 178, cysteine 183, cysteine 186, cysteine 204, and cysteine 207. Positions proline 221 to serine 233 are enriched in polar residues. Residues proline 221–aspartate 249 are disordered. A compositionally biased stretch (acidic residues) spans methionine 238 to aspartate 249. A phosphoserine mark is found at serine 239 and serine 248.

In terms of assembly, may interact with EEA1. In terms of tissue distribution, expressed in placenta, ovary and small intestine, as well as in heart and pancreas. Also expressed in peripheral blood mononuclear cells and dendritic cells.

It localises to the early endosome membrane. The protein localises to the endoplasmic reticulum. Functionally, may play a role in early endosome fusion upstream of RAB5, hence regulating receptor trafficking and fluid-phase transport. Enhances cellular sensitivity to TNF-induced apoptosis. The sequence is that of Pleckstrin homology domain-containing family F member 2 (PLEKHF2) from Homo sapiens (Human).